The primary structure comprises 32 residues: Beta-hexosaminidase (32 aa).

Residues 1-32 enclose the GH18 domain; the sequence is GKSSSRPLGDATLGDLDFDIEVTQDYWDDLAR. The active-site Proton donor is Glu21.

Belongs to the glycosyl hydrolase 18 family. Chitinase class II subfamily.

The catalysed reaction is Hydrolysis of terminal non-reducing N-acetyl-D-hexosamine residues in N-acetyl-beta-D-hexosaminides.. Its activity is regulated as follows. Activity is decreased by HgCl(2) and maltose. Activity is stimulated by Na(2)SeO(4), BaCl(2), MgCl(2), chondroitin 6-sulfate and phenylmethylsulfonyl fluoride. Preferentially hydrolyzes pNP-GlcNAc, hydrolyzes pNP-GalNAc to a lesser extent. The chain is Beta-hexosaminidase from Palythoa caribaeorum (White encrusting zoanthid coral).